A 191-amino-acid chain; its full sequence is Protein GrpE (191 aa).

2 stretches are compositionally biased toward basic and acidic residues: residues 1 to 19 and 29 to 42; these read MKDE…EPES and QQGE…EKEC. Positions 1-42 are disordered; it reads MKDEHNQEHDHLSQKEPESYQKACACKEQQGEEKQEASEKEC.

The protein belongs to the GrpE family. In terms of assembly, homodimer.

Its subcellular location is the cytoplasm. In terms of biological role, participates actively in the response to hyperosmotic and heat shock by preventing the aggregation of stress-denatured proteins, in association with DnaK and GrpE. It is the nucleotide exchange factor for DnaK and may function as a thermosensor. Unfolded proteins bind initially to DnaJ; upon interaction with the DnaJ-bound protein, DnaK hydrolyzes its bound ATP, resulting in the formation of a stable complex. GrpE releases ADP from DnaK; ATP binding to DnaK triggers the release of the substrate protein, thus completing the reaction cycle. Several rounds of ATP-dependent interactions between DnaJ, DnaK and GrpE are required for fully efficient folding. The chain is Protein GrpE from Helicobacter pylori (strain HPAG1).